Consider the following 37-residue polypeptide: Large ribosomal subunit protein bL36c (37 aa).

The protein belongs to the bacterial ribosomal protein bL36 family.

It localises to the plastid. Its subcellular location is the chloroplast. This Chara vulgaris (Common stonewort) protein is Large ribosomal subunit protein bL36c.